We begin with the raw amino-acid sequence, 408 residues long: Histidine--tRNA ligase (408 aa).

This sequence belongs to the class-II aminoacyl-tRNA synthetase family. As to quaternary structure, homodimer.

The protein localises to the cytoplasm. The catalysed reaction is tRNA(His) + L-histidine + ATP = L-histidyl-tRNA(His) + AMP + diphosphate + H(+). This is Histidine--tRNA ligase from Campylobacter concisus (strain 13826).